The primary structure comprises 107 residues: Large ribosomal subunit protein uL24 (107 aa).

It belongs to the universal ribosomal protein uL24 family. In terms of assembly, part of the 50S ribosomal subunit.

Functionally, one of two assembly initiator proteins, it binds directly to the 5'-end of the 23S rRNA, where it nucleates assembly of the 50S subunit. In terms of biological role, one of the proteins that surrounds the polypeptide exit tunnel on the outside of the subunit. In Kosmotoga olearia (strain ATCC BAA-1733 / DSM 21960 / TBF 19.5.1), this protein is Large ribosomal subunit protein uL24.